Here is a 152-residue protein sequence, read N- to C-terminus: Deoxyuridine 5'-triphosphate nucleotidohydrolase (152 aa).

Substrate-binding positions include 71–73 (RSG), asparagine 84, 88–90 (LID), and methionine 98.

The protein belongs to the dUTPase family. The cofactor is Mg(2+).

The catalysed reaction is dUTP + H2O = dUMP + diphosphate + H(+). The protein operates within pyrimidine metabolism; dUMP biosynthesis; dUMP from dCTP (dUTP route): step 2/2. Its function is as follows. This enzyme is involved in nucleotide metabolism: it produces dUMP, the immediate precursor of thymidine nucleotides and it decreases the intracellular concentration of dUTP so that uracil cannot be incorporated into DNA. This is Deoxyuridine 5'-triphosphate nucleotidohydrolase from Shewanella denitrificans (strain OS217 / ATCC BAA-1090 / DSM 15013).